We begin with the raw amino-acid sequence, 339 residues long: Centromere protein N (339 aa).

A phosphoserine mark is found at S226 and S235.

The protein belongs to the CENP-N/CHL4 family. Component of the CENPA-NAC complex, at least composed of CENPA, CENPC, CENPH, CENPM, CENPN, CENPT and CENPU. The CENPA-NAC complex interacts with the CENPA-CAD complex, composed of CENPI, CENPK, CENPL, CENPO, CENPP, CENPQ, CENPR and CENPS. Interacts directly with CENPA. Identified in a centromere complex containing histones H2A, H2B and H4, and at least CENPA, CENPB, CENPC, CENPT, CENPN, HJURP, SUPT16H, SSRP1 and RSF1.

The protein localises to the nucleus. Its subcellular location is the chromosome. The protein resides in the centromere. It localises to the kinetochore. Component of the CENPA-NAC (nucleosome-associated) complex, a complex that plays a central role in assembly of kinetochore proteins, mitotic progression and chromosome segregation. The CENPA-NAC complex recruits the CENPA-CAD (nucleosome distal) complex and may be involved in incorporation of newly synthesized CENPA into centromeres. CENPN is the first protein to bind specifically to CENPA nucleosomes and the direct binding of CENPA nucleosomes by CENPN is required for centromere assembly. Required for chromosome congression and efficiently align the chromosomes on a metaphase plate. The sequence is that of Centromere protein N (CENPN) from Bos taurus (Bovine).